The sequence spans 185 residues: uncharacterized protein (185 aa).

The next 3 membrane-spanning stretches (helical) occupy residues 9-29 (LVAA…WAFL), 72-92 (VLFF…ILIV), and 111-131 (FFFI…IPFL).

The protein resides in the cell membrane. This is an uncharacterized protein from Bacillus subtilis (strain 168).